We begin with the raw amino-acid sequence, 157 residues long: Root allergen protein (157 aa).

This sequence belongs to the BetVI family.

In Taraxacum officinale (Common dandelion), this protein is Root allergen protein.